Consider the following 904-residue polypeptide: NADH-quinone oxidoreductase subunit G (904 aa).

One can recognise a 2Fe-2S ferredoxin-type domain in the interval Met1–Glu83. 4 residues coordinate [2Fe-2S] cluster: Cys34, Cys45, Cys48, and Cys67. The 4Fe-4S His(Cys)3-ligated-type domain maps to Glu83 to Gly122. [4Fe-4S] cluster-binding residues include His99, Cys103, Cys106, Cys112, Cys151, Cys154, Cys157, Cys201, Cys228, Cys231, Cys235, and Cys263. Residues Met221–Asp277 enclose the 4Fe-4S Mo/W bis-MGD-type domain.

The protein belongs to the complex I 75 kDa subunit family. Composed of 13 different subunits. Subunits NuoCD, E, F, and G constitute the peripheral sector of the complex. The cofactor is [2Fe-2S] cluster. [4Fe-4S] cluster is required as a cofactor.

The catalysed reaction is a quinone + NADH + 5 H(+)(in) = a quinol + NAD(+) + 4 H(+)(out). In terms of biological role, NDH-1 shuttles electrons from NADH, via FMN and iron-sulfur (Fe-S) centers, to quinones in the respiratory chain. The immediate electron acceptor for the enzyme in this species is believed to be ubiquinone. Couples the redox reaction to proton translocation (for every two electrons transferred, four hydrogen ions are translocated across the cytoplasmic membrane), and thus conserves the redox energy in a proton gradient. In Pseudomonas putida (strain ATCC 47054 / DSM 6125 / CFBP 8728 / NCIMB 11950 / KT2440), this protein is NADH-quinone oxidoreductase subunit G (nuoG).